Reading from the N-terminus, the 342-residue chain is DNA repair protein RAD51 homolog 1 (342 aa).

The interval 1–24 (MTTMEQRRNQNAVQQQDDEETQHG) is disordered. A HhH domain is found at 51-80 (TVEGVAYTPRKDLLQIKGISDAKVDKIVEA). The FtsK domain maps to 100-314 (QEIIQITSGS…LRKGRAEERI (215 aa)). 130–137 (GEFRSGKT) provides a ligand contact to ATP.

It belongs to the RecA family. RAD51 subfamily. Self-associates and interacts with XRCC3. Binds to RAD54/CHR25. Interacts with BRCA2A and BRCA2B. Can form a tripartite complex with both BRCA2B and DSS1(I). As to expression, detected in various tissues. Higher expression in reproductive tissues than in vegetative tissues, with the highest expression level in young flower buds. At cellular level, is expressed at low levels in flower primordia, then at higher levels in young anthers and at highest levels in both females and males meiocytes. Not detected in gametophytes.

It localises to the nucleus. Functionally, binds to single and double-stranded DNA and exhibits DNA-dependent ATPase activity. Unwinds duplex DNA. Component of the meiotic recombination pathway. Seems to play a role in mediating chromosome homology search, chromosome pairing and synapsis at early stages and probably chromosome crossing-over at later stages in meiosis. Probably is involved in the repair of meiotic double strand breaks (DBSs) generated by AtSPO11-1 and in homologous recombination. Its function is dispensable for vegetative growth and root mitosis. This chain is DNA repair protein RAD51 homolog 1, found in Arabidopsis thaliana (Mouse-ear cress).